Consider the following 209-residue polypeptide: Large ribosomal subunit protein uL3 (209 aa).

The interval 130–162 (RGPMTHGSKFKRAPGSMGASSDPSRTFKNKRMP) is disordered.

The protein belongs to the universal ribosomal protein uL3 family. As to quaternary structure, part of the 50S ribosomal subunit. Forms a cluster with proteins L14 and L19.

Its function is as follows. One of the primary rRNA binding proteins, it binds directly near the 3'-end of the 23S rRNA, where it nucleates assembly of the 50S subunit. This chain is Large ribosomal subunit protein uL3, found in Clostridium botulinum (strain Alaska E43 / Type E3).